The primary structure comprises 819 residues: MGSGPIDPLELLKGLDNILGQGGEVKALEGMAKIFNLMKQSQKMVNRCIYLNIVLQTHSPDILSKFIRVGGYKLLNNWLTYARTCNNSPLLHQILLTLQHLPLTVDHLKQNNTAKLVKQLSKSSEDEELRKLAGILVNDWMAVIRSQTNIQPADKEKKKKKEDAKGSSPVLDKTSEAKSEDNGDKKEKPKIQRTTAPSHAKFRSTGLEVEASSLVPVKKPTPVPVLSDKYLKPVPVKRQSSVPVPGDAAPAEKKYKPLNIVPNTTKEIKVKIIPPQPIESLGFLDALNSAPVPGIKIKKKKKAVSPTSNKASPFDSKSPTEASSLTKPSSPEPEPPVEGMEVERPGTPVPAIELPEPMEISAPPPPAPSETKPSEADASQLTKKGKKRKTVSWPEESRLREYFYFELDETERVNVNKIKDFGEAAKREMLKDRQAFQNARRHSHDTMEEVIPWVLPRLLNLPGALVQMGSNSTEKHAQAEREMGILQEIFLSKESVPDTPHEPDPESYEPSPPKLIPLDEDCSMDDGVYPESMDQSTESQSPDLNGAKLPPVLANLMGSMGSSKSPPNTLPGTMQEILTSIMGAQGNAKPEDLMKQPDFSEKIKHLLGSLQNQNQNQGPPGPAGQGSQGPVNIGFPPPSQKNHQPPPPHHQPPPPHYPPPGPNGPFQGPHGPPGGPRMMGPPPPQRDGYWEPPPNENLRGGSHHGGERGGMRGGDRGPPPPPFHRNRGGRGGEPGYRGRGRGGERGHPGRNGPYGMGHGDHRGHEGHRGHGGHGDHRGHGHGGDMSTRPTCRHFMMKGNCRYENNCAFYHPGINGPPLP.

A TFIIS N-terminal domain is found at 73 to 147 (KLLNNWLTYA…NDWMAVIRSQ (75 aa)). 3 disordered regions span residues 151 to 204 (QPAD…KFRS), 296 to 391 (KIKK…RKTV), and 495 to 785 (SVPD…GGDM). Composition is skewed to basic and acidic residues over residues 153 to 165 (ADKEKKKKKEDAK) and 173 to 190 (KTSEAKSEDNGDKKEKPK). Residues 305–327 (SPTSNKASPFDSKSPTEASSLTK) show a composition bias toward polar residues. Positions 386–415 (KKRKTVSWPEESRLREYFYFELDETERVNV) match the PP1-binding motif motif. The span at 495 to 504 (SVPDTPHEPD) shows a compositional bias: basic and acidic residues. Polar residues-rich tracts occupy residues 533–543 (MDQSTESQSPD) and 560–578 (MGSSKSPPNTLPGTMQEIL). Residues 589–604 (KPEDLMKQPDFSEKIK) show a composition bias toward basic and acidic residues. Positions 606–618 (LLGSLQNQNQNQG) are enriched in low complexity. Pro residues-rich tracts occupy residues 635 to 663 (FPPPSQKNHQPPPPHHQPPPPHYPPPGPN) and 670 to 695 (HGPPGGPRMMGPPPPQRDGYWEPPPN). 2 stretches are compositionally biased toward basic and acidic residues: residues 704 to 715 (HGGERGGMRGGD) and 758 to 777 (HGDHRGHEGHRGHGGHGDHR). The segment at 785–813 (MSTRPTCRHFMMKGNCRYENNCAFYHPGI) adopts a C3H1-type zinc-finger fold.

In terms of assembly, component of the PNUTS-PP1 complex (also named PTW/PP1 complex).

It is found in the nucleus. Its subcellular location is the chromosome. Substrate-recognition component of the PNUTS-PP1 protein phosphatase complex, a protein phosphatase 1 (PP1) complex that promotes RNA polymerase II transcription pause-release, allowing transcription elongation. Promoter-proximal pausing by RNA polymerase II is a transcription halt following transcription initiation but prior to elongation, which acts as a checkpoint to control that transcripts are favorably configured for transcriptional elongation. The PNUTS-PP1 complex mediates the release of RNA polymerase II from promoter-proximal region of genes by catalyzing dephosphorylation of proteins involved in transcription. In some context, PPP1R10/PNUTS also acts as an inhibitor of protein phosphatase 1 (PP1) activity by preventing access to substrates. In Xenopus laevis (African clawed frog), this protein is Serine/threonine-protein phosphatase 1 regulatory subunit 10 (ppp1r10).